Reading from the N-terminus, the 742-residue chain is Catalase-peroxidase (742 aa).

Residues 1 to 43 (MSDSCPVAHEGNTQSTSESENPVIPSPTPAANRPRNNRDWWPN) are disordered. The segment covering 11 to 20 (GNTQSTSESE) has biased composition (polar residues). The tryptophyl-tyrosyl-methioninium (Trp-Tyr) (with M-257) cross-link spans 109-231 (WHAAGTYRIA…LGAVQMGLIY (123 aa)). The Proton acceptor role is filled by His-110. Positions 231-257 (YVNPEGPNGQPDPLAAARDIRETFSRM) form a cross-link, tryptophyl-tyrosyl-methioninium (Tyr-Met) (with W-109). A heme b-binding site is contributed by His-272.

It belongs to the peroxidase family. Peroxidase/catalase subfamily. In terms of assembly, homodimer or homotetramer. Heme b serves as cofactor. In terms of processing, formation of the three residue Trp-Tyr-Met cross-link is important for the catalase, but not the peroxidase activity of the enzyme.

The enzyme catalyses H2O2 + AH2 = A + 2 H2O. The catalysed reaction is 2 H2O2 = O2 + 2 H2O. Bifunctional enzyme with both catalase and broad-spectrum peroxidase activity. The sequence is that of Catalase-peroxidase from Rhodococcus jostii (strain RHA1).